The following is a 122-amino-acid chain: Large ribosomal subunit protein uL14 (122 aa).

Belongs to the universal ribosomal protein uL14 family. Part of the 50S ribosomal subunit. Forms a cluster with proteins L3 and L19. In the 70S ribosome, L14 and L19 interact and together make contacts with the 16S rRNA in bridges B5 and B8.

Binds to 23S rRNA. Forms part of two intersubunit bridges in the 70S ribosome. The chain is Large ribosomal subunit protein uL14 from Borrelia hermsii (strain HS1 / DAH).